Consider the following 144-residue polypeptide: Granulocyte-macrophage colony-stimulating factor (144 aa).

The first 17 residues, 1 to 17, serve as a signal peptide directing secretion; sequence MWLQNLLFLNTVVCSIS. O-linked (GalNAc...) serine glycosylation is found at S22 and S24. T27 is a glycosylation site (O-linked (GalNAc...) threonine). 3 N-linked (GlcNAc...) asparagine glycosylation sites follow: N44, N45, and N54. Intrachain disulfides connect C71/C113 and C105/C138.

This sequence belongs to the GM-CSF family. In terms of assembly, monomer. The signaling GM-CSF receptor complex is a dodecamer of two head-to-head hexamers of two alpha, two beta, and two ligand subunits.

The protein resides in the secreted. Cytokine that stimulates the growth and differentiation of hematopoietic precursor cells from various lineages, including granulocytes, macrophages, eosinophils and erythrocytes. The sequence is that of Granulocyte-macrophage colony-stimulating factor (CSF2) from Felis catus (Cat).